Reading from the N-terminus, the 257-residue chain is Beta-fibrinogenase mucrofibrase-3 (257 aa).

Residues 1–18 form the signal peptide; that stretch reads MVLIRVLANLLILQLSYA. Residues 19 to 24 constitute a propeptide that is removed on maturation; it reads QKSSEL. The region spanning 25–248 is the Peptidase S1 domain; it reads VIGGDECNIN…HLDWIKGIIA (224 aa). Cystine bridges form between cysteine 31/cysteine 162, cysteine 49/cysteine 65, cysteine 97/cysteine 255, cysteine 141/cysteine 209, cysteine 173/cysteine 188, and cysteine 199/cysteine 224. Catalysis depends on charge relay system residues histidine 64 and aspartate 109. Serine 203 acts as the Charge relay system in catalysis.

Belongs to the peptidase S1 family. Snake venom subfamily. In terms of assembly, monomer. In terms of tissue distribution, expressed by the venom gland.

Its subcellular location is the secreted. Its function is as follows. Snake venom serine protease with fibrinogenolytic activities. Cleaves beta-chain of fibrinogen (FGB) efficiently and shows relatively lower activity on alpha-chain. The polypeptide is Beta-fibrinogenase mucrofibrase-3 (Protobothrops mucrosquamatus (Taiwan habu)).